We begin with the raw amino-acid sequence, 201 residues long: Casparian strip membrane protein 4 (201 aa).

The disordered stretch occupies residues 1-23 (MEGKAAVTTSTEHGDGEASRTAA). Residues 1 to 41 (MEGKAAVTTSTEHGDGEASRTAARTVVSGSSRGGAASRALS) lie on the Cytoplasmic side of the membrane. A helical transmembrane segment spans residues 42–62 (VADLILRVVAVVAIVDSAIAM). The Extracellular segment spans residues 63 to 87 (GTTNQTLPFFTQFLRFKAQYSDLPT). N-linked (GlcNAc...) asparagine glycosylation is present at asparagine 66. A helical membrane pass occupies residues 88–108 (LTLFVVANSAVTAYLVLSIPL). The Cytoplasmic segment spans residues 109–122 (SVVHIIRSRASYSR). The chain crosses the membrane as a helical span at residues 123–143 (LVLIFLDSVMLALVAAVASAS). The Extracellular segment spans residues 144-172 (AAIVYLAHKGNVRANWFAVCQQFDSFCER). A helical transmembrane segment spans residues 173–193 (ISGPLIGSFAAMAVLLLLVLL). At 194 to 201 (SAAALARR) the chain is on the cytoplasmic side.

It belongs to the Casparian strip membrane proteins (CASP) family. In terms of assembly, homodimer and heterodimers.

It is found in the cell membrane. In terms of biological role, regulates membrane-cell wall junctions and localized cell wall deposition. Required for establishment of the Casparian strip membrane domain (CSD) and the subsequent formation of Casparian strips, a cell wall modification of the root endodermis that determines an apoplastic barrier between the intraorganismal apoplasm and the extraorganismal apoplasm and prevents lateral diffusion. In Oryza sativa subsp. japonica (Rice), this protein is Casparian strip membrane protein 4.